Here is a 495-residue protein sequence, read N- to C-terminus: Lysine--tRNA ligase (495 aa).

Positions 406 and 413 each coordinate Mg(2+).

The protein belongs to the class-II aminoacyl-tRNA synthetase family. As to quaternary structure, homodimer. It depends on Mg(2+) as a cofactor.

It is found in the cytoplasm. It carries out the reaction tRNA(Lys) + L-lysine + ATP = L-lysyl-tRNA(Lys) + AMP + diphosphate. This Leptospira interrogans serogroup Icterohaemorrhagiae serovar Lai (strain 56601) protein is Lysine--tRNA ligase.